A 970-amino-acid polypeptide reads, in one-letter code: Probable histidine kinase 6 (970 aa).

Topologically, residues Met1 to Asn12 are cytoplasmic. A helical membrane pass occupies residues Ala13–Leu33. At Arg34–Ser306 the chain is on the extracellular side. The CHASE domain occupies Phe82–Arg294. Residues Ala307–Ala327 traverse the membrane as a helical segment. Residues Ala328–Val970 are Cytoplasmic-facing. Residues Thr362–Arg651 form the Histidine kinase domain. Position 365 is a phosphohistidine; by autocatalysis (His365). Response regulatory domains are found at residues Lys676–Leu802 and Asn827–Val962. Residue Asp877 is modified to 4-aspartylphosphate.

Post-translationally, activation probably requires a transfer of a phosphate group between a His in the transmitter domain and an Asp of the receiver domain. Highly expressed in spikelets and at lower levels in roots, young leaves, mature leaves and stems.

The protein localises to the cell membrane. It carries out the reaction ATP + protein L-histidine = ADP + protein N-phospho-L-histidine.. In terms of biological role, cytokinin receptor related to bacterial two-component regulators. Functions as a histidine kinase and transmits the stress signal to a downstream MAPK cascade. The polypeptide is Probable histidine kinase 6 (Oryza sativa subsp. japonica (Rice)).